The chain runs to 89 residues: Small ribosomal subunit protein uS15 (89 aa).

It belongs to the universal ribosomal protein uS15 family. In terms of assembly, part of the 30S ribosomal subunit. Forms a bridge to the 50S subunit in the 70S ribosome, contacting the 23S rRNA.

In terms of biological role, one of the primary rRNA binding proteins, it binds directly to 16S rRNA where it helps nucleate assembly of the platform of the 30S subunit by binding and bridging several RNA helices of the 16S rRNA. Functionally, forms an intersubunit bridge (bridge B4) with the 23S rRNA of the 50S subunit in the ribosome. In Halalkalibacterium halodurans (strain ATCC BAA-125 / DSM 18197 / FERM 7344 / JCM 9153 / C-125) (Bacillus halodurans), this protein is Small ribosomal subunit protein uS15.